The chain runs to 208 residues: MSRYLGSVCKLCRREKEKLFLKGERCSSNCALNRKRGKNSPGQHGASKVKMSDYAKHLREKQKARRMYGLTEEQFSNYYKTAEKMKGSAGDNLLKLLELRLDNVVYRLGLASSKKMARQIVNHGNILVNEKKIDVPRYRLKIGDVITFPEKYKSNVIIKKLIEKMVSSIPAWLSFDKSRIAGTVVSEPLAGETSHPINSQLIVEYYSK.

The tract at residues 32–53 (LNRKRGKNSPGQHGASKVKMSD) is disordered. One can recognise an S4 RNA-binding domain in the interval 99 to 161 (LRLDNVVYRL…YKSNVIIKKL (63 aa)).

Belongs to the universal ribosomal protein uS4 family. In terms of assembly, part of the 30S ribosomal subunit. Contacts protein S5. The interaction surface between S4 and S5 is involved in control of translational fidelity.

One of the primary rRNA binding proteins, it binds directly to 16S rRNA where it nucleates assembly of the body of the 30S subunit. In terms of biological role, with S5 and S12 plays an important role in translational accuracy. This is Small ribosomal subunit protein uS4 from Endomicrobium trichonymphae.